Consider the following 265-residue polypeptide: MGRSRSRSSSRSKHVKSGKHNKKRSRSREKERVRKRSKSRESKRNRRRESRSRSRSNTASRRERERPASPPDRIDIFGRTVSKRSSLDEKQKREEEEKKAEYERQRRIRQQEIEEKLIEEETARRVEELVAKRVEEELEKRKDEIEREVLRRVEEAKRIMEKQLLEELERQRQAELSAQKAREEEERGKREELERILEENNRKIADAQAKLAEEQLKIVEEQRKIHEERMKLDQERQRQQKEEQKIILGKGKSRPKLSFSFKNPD.

Positions 1–54 (MGRSRSRSSSRSKHVKSGKHNKKRSRSREKERVRKRSKSRESKRNRRRESRSRS) are enriched in basic residues. The necessary and sufficient for RNA binding stretch occupies residues 1–66 (MGRSRSRSSS…NTASRRERER (66 aa)). Residues 1-105 (MGRSRSRSSS…EEKKAEYERQ (105 aa)) form a disordered region. Composition is skewed to basic and acidic residues over residues 60 to 76 (SRRERERPASPPDRIDI) and 85 to 105 (SSLDEKQKREEEEKKAEYERQ). The necessary and sufficient for transcriptional regulation stretch occupies residues 67–265 (PASPPDRIDI…KLSFSFKNPD (199 aa)). Residues 164-168 (LLEEL) carry the LXXLL motif 1; degenerate motif. Residues 172–192 (RQAELSAQKAREEEERGKREE) form a disordered region. Residues 180–192 (KAREEEERGKREE) show a composition bias toward basic and acidic residues. The LXXLL motif 2; degenerate motif lies at 193–197 (LERIL). Over residues 229-245 (RMKLDQERQRQQKEEQK) the composition is skewed to basic and acidic residues. The segment at 229-265 (RMKLDQERQRQQKEEQKIILGKGKSRPKLSFSFKNPD) is disordered.

Belongs to the ARGLU1 family.

Its subcellular location is the nucleus. It localises to the nucleus speckle. The protein resides in the chromosome. Functionally, dual function regulator of gene expression; regulator of transcription and modulator of alternative splicing. General coactivator of nuclear receptor-induced gene expression. The chain is Arginine and glutamate-rich protein 1 (arglu1) from Xenopus laevis (African clawed frog).